A 234-amino-acid chain; its full sequence is Short neuropeptide F (234 aa).

Residues 1 to 22 (MYRINLTTFTLLLVLAVGSLMS) form the signal peptide. Residues 23-56 (ESLHPSDGAINDLYEYLLQREYAAPVSYADHQIK) constitute a propeptide that is removed on maturation. Residues F69 and F101 each carry the phenylalanine amide modification. Tryptophan amide is present on W132. Residue F165 is modified to Phenylalanine amide. Residues 181–190 (TTGQQAQPAN) are compositionally biased toward polar residues. The disordered stretch occupies residues 181–234 (TTGQQAQPANEASEKRAPTQRLRWGRSDPALAKDSSEDKALDVEESENTNADDK). W204 carries the tryptophan amide modification. Positions 207–234 (SDPALAKDSSEDKALDVEESENTNADDK) are excised as a propeptide.

Belongs to the NPY family. As to expression, expressed in all body parts of larva, pupae and adults.

It is found in the secreted. Its function is as follows. Plays a role in controlling food intake and regulating body size. The chain is Short neuropeptide F from Anopheles gambiae (African malaria mosquito).